Here is a 147-residue protein sequence, read N- to C-terminus: TRAF-interacting protein with FHA domain-containing protein B (147 aa).

Residues 36-108 form the FHA domain; sequence LLVGRGQDTH…LHSVNRISFS (73 aa).

In terms of assembly, interacts with TIFA.

Its function is as follows. Inhibits TIFA-mediated TRAF6 activation possibly by inducing a conformational change in TIFA. The protein is TRAF-interacting protein with FHA domain-containing protein B of Rattus norvegicus (Rat).